The following is a 435-amino-acid chain: 3-phosphoshikimate 1-carboxyvinyltransferase (435 aa).

3-phosphoshikimate-binding residues include Lys28, Ser29, and Arg33. Residue Lys28 participates in phosphoenolpyruvate binding. Residues Gly100 and Arg128 each coordinate phosphoenolpyruvate. The 3-phosphoshikimate site is built by Ser173, Gln175, Asp321, and Lys348. Gln175 is a phosphoenolpyruvate binding site. The active-site Proton acceptor is Asp321. Positions 352 and 394 each coordinate phosphoenolpyruvate.

It belongs to the EPSP synthase family. In terms of assembly, monomer.

It is found in the cytoplasm. It carries out the reaction 3-phosphoshikimate + phosphoenolpyruvate = 5-O-(1-carboxyvinyl)-3-phosphoshikimate + phosphate. The protein operates within metabolic intermediate biosynthesis; chorismate biosynthesis; chorismate from D-erythrose 4-phosphate and phosphoenolpyruvate: step 6/7. Functionally, catalyzes the transfer of the enolpyruvyl moiety of phosphoenolpyruvate (PEP) to the 5-hydroxyl of shikimate-3-phosphate (S3P) to produce enolpyruvyl shikimate-3-phosphate and inorganic phosphate. The protein is 3-phosphoshikimate 1-carboxyvinyltransferase of Desulfitobacterium hafniense (strain DSM 10664 / DCB-2).